A 223-amino-acid polypeptide reads, in one-letter code: MKILLIEDNQRTQEWVTQGLSEAGYVIDAVSDGRDGLYLALKDDYALIILDIMLPGMDGWQILQTLRTAKQTPVICLTARDSVDDRVRGLDSGANDYLVKPFSFSELLARVRAQLRQHHALNSTLEISGLRMDSVSHSVSRDNISITLTRKEFQLLWLLASRAGEIIPRTVIASEIWGINFDSDTNTVDVAIRRLRAKVDDPFPEKLIATIRGMGYSFVAVKK.

The Response regulatory domain occupies 2–115 (KILLIEDNQR…ELLARVRAQL (114 aa)). Aspartate 51 carries the 4-aspartylphosphate modification. Positions 122–220 (NSTLEISGLR…IRGMGYSFVA (99 aa)) form a DNA-binding region, ompR/PhoB-type.

Phosphorylated by HprS.

The protein localises to the cytoplasm. Member of a two-component regulatory system HprR/HprS involved in response to hydrogen peroxide. Regulates the expression of at least 5 operons, cyoABCDE, hprRS, hiuH, cusRS and cusCFBA. Bifunctional regulator that acts as an activator and a repressor. This is Transcriptional regulatory protein HprR from Escherichia coli (strain K12).